A 215-amino-acid chain; its full sequence is Large ribosomal subunit protein uL3 (215 aa).

Residues 136 to 155 (GVSISHRSHGSTGQRQDPGK) are disordered. Q151 is subject to N5-methylglutamine.

It belongs to the universal ribosomal protein uL3 family. Part of the 50S ribosomal subunit. Forms a cluster with proteins L14 and L19. Post-translationally, methylated by PrmB.

In terms of biological role, one of the primary rRNA binding proteins, it binds directly near the 3'-end of the 23S rRNA, where it nucleates assembly of the 50S subunit. The protein is Large ribosomal subunit protein uL3 of Rickettsia africae (strain ESF-5).